The chain runs to 426 residues: Histidine--tRNA ligase (426 aa).

It belongs to the class-II aminoacyl-tRNA synthetase family. In terms of assembly, homodimer.

It localises to the cytoplasm. It carries out the reaction tRNA(His) + L-histidine + ATP = L-histidyl-tRNA(His) + AMP + diphosphate + H(+). In Streptococcus pyogenes serotype M5 (strain Manfredo), this protein is Histidine--tRNA ligase.